A 621-amino-acid chain; its full sequence is uncharacterized protein (621 aa).

The next 3 helical transmembrane spans lie at 240–260 (FFDA…NLLW), 548–568 (LGIV…VWTV), and 587–607 (VIIG…LTFM).

The protein resides in the cell membrane. This is an uncharacterized protein from Mycoplasma pneumoniae (strain ATCC 29342 / M129 / Subtype 1) (Mycoplasmoides pneumoniae).